Consider the following 235-residue polypeptide: Octanoyltransferase (235 aa).

The BPL/LPL catalytic domain maps to 59–235; sequence PGSSQAVWLL…KKSLTERFGL (177 aa). Substrate-binding positions include 101–108, 168–170, and 181–183; these read RGGEVTHH, SIG, and GLS. C199 acts as the Acyl-thioester intermediate in catalysis.

The protein belongs to the LipB family.

It localises to the cytoplasm. It carries out the reaction octanoyl-[ACP] + L-lysyl-[protein] = N(6)-octanoyl-L-lysyl-[protein] + holo-[ACP] + H(+). It functions in the pathway protein modification; protein lipoylation via endogenous pathway; protein N(6)-(lipoyl)lysine from octanoyl-[acyl-carrier-protein]: step 1/2. In terms of biological role, catalyzes the transfer of endogenously produced octanoic acid from octanoyl-acyl-carrier-protein onto the lipoyl domains of lipoate-dependent enzymes. Lipoyl-ACP can also act as a substrate although octanoyl-ACP is likely to be the physiological substrate. This is Octanoyltransferase from Prochlorococcus marinus (strain MIT 9211).